The sequence spans 1307 residues: Contactin-associated protein like 5-3 (1307 aa).

An N-terminal signal peptide occupies residues 1–24 (MDFVPRLNSVLTLVLSGLWHFGLT). The Extracellular portion of the chain corresponds to 25 to 1238 (ATNCDNCDDP…PLTNAVLSDS (1214 aa)). An F5/8 type C domain is found at 31–175 (CDDPLASFLS…IGMRMEVYGC (145 aa)). A disulfide bond links C31 and C175. Laminin G-like domains lie at 181 to 361 (VADF…TFSC) and 368 to 545 (PITF…IDLC). N-linked (GlcNAc...) asparagine glycosylation occurs at N283. Cysteines 330 and 361 form a disulfide. N-linked (GlcNAc...) asparagine glycosylation is present at N497. 4 disulfide bridges follow: C513–C545, C551–C562, C556–C571, and C573–C583. Residues 547 to 584 (IKDRCLPNYCEHGGHCVQTWTTFYCNCSNTGYTGATCH) form the EGF-like 1 domain. Residues 585 to 792 (DSIYEQSCEV…LRCYGDRHFW (208 aa)) enclose the Fibrinogen C-terminal domain. Residues N600, N624, and N637 are each glycosylated (N-linked (GlcNAc...) asparagine). One can recognise a Laminin G-like 3 domain in the interval 793-958 (NAVSFSTEAS…MVTSGVRPGC (166 aa)). Cystine bridges form between C931-C958, C962-C975, C969-C984, C986-C996, and C1165-C1200. Positions 959 to 997 (PGHCSSYGNNCHNGGKCVEKHNSYSCDCTKSPYEGPFCQ) constitute an EGF-like 2 domain. The 182-residue stretch at 1019–1200 (PVSKNTSTSS…VQGSLREFSC (182 aa)) folds into the Laminin G-like 4 domain. The helical transmembrane segment at 1239–1259 (AVIGGVIAVVTFITFCVIGIM) threads the bilayer. At 1260–1307 (TRFLYQHKQSHCTSQKKEKEYSENLDSSFRHDIDLQSTTSKCKREYFI) the chain is on the cytoplasmic side.

It belongs to the neurexin family.

The protein localises to the membrane. May play a role in the correct development and proper functioning of the peripheral and central nervous system and be involved in cell adhesion and intercellular communication. This is Contactin-associated protein like 5-3 (Cntnap5c) from Rattus norvegicus (Rat).